Here is a 272-residue protein sequence, read N- to C-terminus: Dihydropteroate synthase (272 aa).

A Pterin-binding domain is found at 1–256 (MIKTKIMGIL…NVLLNTRLAQ (256 aa)). A Mg(2+)-binding site is contributed by Asn-11. Residues Thr-51, Asp-89, Asn-108, Asp-172, Lys-208, and 244 to 246 (RVH) each bind (7,8-dihydropterin-6-yl)methyl diphosphate.

Belongs to the DHPS family. As to quaternary structure, homodimer. The cofactor is Mg(2+).

It catalyses the reaction (7,8-dihydropterin-6-yl)methyl diphosphate + 4-aminobenzoate = 7,8-dihydropteroate + diphosphate. The protein operates within cofactor biosynthesis; tetrahydrofolate biosynthesis; 7,8-dihydrofolate from 2-amino-4-hydroxy-6-hydroxymethyl-7,8-dihydropteridine diphosphate and 4-aminobenzoate: step 1/2. Catalyzes the condensation of para-aminobenzoate (pABA) with 6-hydroxymethyl-7,8-dihydropterin diphosphate (DHPt-PP) to form 7,8-dihydropteroate (H2Pte), the immediate precursor of folate derivatives. The sequence is that of Dihydropteroate synthase (folP) from Staphylococcus epidermidis (strain ATCC 12228 / FDA PCI 1200).